The chain runs to 801 residues: Cadherin-20 (801 aa).

Positions 1 to 34 (MWTSGRMSNAKNWLGLGMSLYFWGLMDLTTTVLS) are cleaved as a signal peptide. A propeptide spanning residues 35 to 59 (DTPTPQGELEALLSDKPQSHQRTKR) is cleaved from the precursor. Over 60-619 (SWVWNQFFVL…AYMLPVSLSR (560 aa)) the chain is Extracellular. 5 consecutive Cadherin domains span residues 61–165 (WVWN…EPKF), 166–274 (LDGP…PPRF), 275–389 (PQKH…PPVF), 390–494 (EPGF…APEF), and 494–610 (FPRF…SPEA). N-linked (GlcNAc...) asparagine glycosylation is present at Asn-261. Asn-420, Asn-461, and Asn-542 each carry an N-linked (GlcNAc...) asparagine glycan. A helical transmembrane segment spans residues 620 to 640 (GALIAILACIFVLLVLVLLIL). The Cytoplasmic portion of the chain corresponds to 641–801 (SMRRHRKQPY…GASEGPAPLW (161 aa)).

In terms of tissue distribution, expressed in placenta, adult brain, and fetal brain.

It localises to the cell membrane. Its function is as follows. Cadherins are calcium-dependent cell adhesion proteins. They preferentially interact with themselves in a homophilic manner in connecting cells; cadherins may thus contribute to the sorting of heterogeneous cell types. This is Cadherin-20 (CDH20) from Homo sapiens (Human).